Reading from the N-terminus, the 137-residue chain is 14 kDa proline-rich protein DC2.15 (137 aa).

A signal peptide spans 1 to 25 (MGSKNSASVALFFTLNILFFALVSS). Positions 30 to 53 (PDPYKPKPKPTPKPTPTPYPSAGK) are disordered. A compositionally biased stretch (pro residues) spans 38–48 (KPTPKPTPTPY). A helical transmembrane segment spans residues 88–104 (LEGLVNLEAAVCLCTAI).

It localises to the membrane. Functionally, may be connected with the initiation of embryogenesis or with the metabolic changes produced by the removal of auxins. This is 14 kDa proline-rich protein DC2.15 from Daucus carota (Wild carrot).